The primary structure comprises 183 residues: Inner membrane-spanning protein YciB (183 aa).

5 helical membrane-spanning segments follow: residues 22–44, 54–74, 76–96, 119–139, and 149–169; these read IYTATGALVVVTGLQLIYSWVRY, TFLLVGFFGGLTVFFHDDAFI, WKVTVINILFALGLLISRYGF, VNLAWVGFFTVCGLLNLYVAF, and FKVFGLLGMTLVFTLLSGVYL.

The protein belongs to the YciB family.

Its subcellular location is the cell inner membrane. Functionally, plays a role in cell envelope biogenesis, maintenance of cell envelope integrity and membrane homeostasis. This is Inner membrane-spanning protein YciB from Aeromonas salmonicida (strain A449).